We begin with the raw amino-acid sequence, 286 residues long: B3 domain-containing protein REM20 (286 aa).

Residues proline 9–tryptophan 102 constitute a DNA-binding region (TF-B3). The tract at residues serine 117–glutamine 161 is disordered. The segment covering serine 119–isoleucine 159 has biased composition (acidic residues).

The protein localises to the nucleus. In Arabidopsis thaliana (Mouse-ear cress), this protein is B3 domain-containing protein REM20 (REM20).